We begin with the raw amino-acid sequence, 338 residues long: Glycerol-3-phosphate dehydrogenase [NAD(P)+] (338 aa).

Residues serine 13, tryptophan 14, and lysine 108 each coordinate NADPH. Sn-glycerol 3-phosphate contacts are provided by lysine 108, glycine 139, and serine 141. Alanine 143 provides a ligand contact to NADPH. Sn-glycerol 3-phosphate is bound by residues lysine 194, aspartate 247, serine 257, arginine 258, and asparagine 259. The active-site Proton acceptor is lysine 194. Arginine 258 contributes to the NADPH binding site. 2 residues coordinate NADPH: valine 282 and glutamate 284.

This sequence belongs to the NAD-dependent glycerol-3-phosphate dehydrogenase family.

It is found in the cytoplasm. The enzyme catalyses sn-glycerol 3-phosphate + NAD(+) = dihydroxyacetone phosphate + NADH + H(+). It catalyses the reaction sn-glycerol 3-phosphate + NADP(+) = dihydroxyacetone phosphate + NADPH + H(+). Its pathway is membrane lipid metabolism; glycerophospholipid metabolism. Functionally, catalyzes the reduction of the glycolytic intermediate dihydroxyacetone phosphate (DHAP) to sn-glycerol 3-phosphate (G3P), the key precursor for phospholipid synthesis. In Listeria innocua serovar 6a (strain ATCC BAA-680 / CLIP 11262), this protein is Glycerol-3-phosphate dehydrogenase [NAD(P)+].